Here is a 101-residue protein sequence, read N- to C-terminus: Large ribosomal subunit protein uL24 (101 aa).

This sequence belongs to the universal ribosomal protein uL24 family. As to quaternary structure, part of the 50S ribosomal subunit.

In terms of biological role, one of two assembly initiator proteins, it binds directly to the 5'-end of the 23S rRNA, where it nucleates assembly of the 50S subunit. Functionally, one of the proteins that surrounds the polypeptide exit tunnel on the outside of the subunit. The protein is Large ribosomal subunit protein uL24 of Borrelia garinii subsp. bavariensis (strain ATCC BAA-2496 / DSM 23469 / PBi) (Borreliella bavariensis).